Consider the following 668-residue polypeptide: Acyl-CoA-binding domain-containing protein 4 (668 aa).

The ACB domain occupies 12-106 (YPERFYAAAS…LEEDDPGWYS (95 aa)). Residues K33, 48–52 (YALYQ), and K74 each bind an acyl-CoA. Kelch repeat units lie at residues 195–242 (KMYI…TLLA), 255–305 (KLLS…MVGK), 307–356 (LVIF…VHAE), 358–407 (FLLI…TIGE), 408–456 (NWFI…LVVS), and 463–508 (VLVA…VNNA). A phosphoserine mark is found at S515 and S520. Residues 538-647 (KVEGNSERII…EQAAMNAKRQ (110 aa)) are a coiled coil. A disordered region spans residues 639–668 (QAAMNAKRQGSGGVWGWLAGSPQEKDDDSP).

The protein belongs to the ACBP family. As to quaternary structure, interacts with RAP2-3/EBP, an ethylene-responsive element binding protein. In terms of tissue distribution, mostly expressed in roots, stems, and leaves, and, to a lower extent, in flowers and siliques.

It is found in the cytoplasm. Its function is as follows. Binds medium- and long-chain acyl-CoA esters with very high affinity. Can interact in vitro with oleoyl-CoA, barely with palmitoyl-CoA, but not with arachidonyl-CoA. May function as an intracellular carrier of acyl-CoA esters. Plays a role in the biosynthesis of membrane lipids including galactolipids and phospholipids. This Arabidopsis thaliana (Mouse-ear cress) protein is Acyl-CoA-binding domain-containing protein 4 (ACBP4).